Consider the following 201-residue polypeptide: UPF0301 protein Atu0781 (201 aa).

It belongs to the UPF0301 (AlgH) family.

This Agrobacterium fabrum (strain C58 / ATCC 33970) (Agrobacterium tumefaciens (strain C58)) protein is UPF0301 protein Atu0781.